Reading from the N-terminus, the 444-residue chain is ATPase PAAT (444 aa).

Ser177, Ser182, and Ser254 each carry phosphoserine. The interval 279 to 300 (SAQPSGEGNTTNHDEGHLMPQN) is disordered. Residues 280–289 (AQPSGEGNTT) are compositionally biased toward polar residues. Ser302 is modified (phosphoserine). The interval 424–444 (PPPGMPLRHYDSRERLSNGER) is disordered. Over residues 431-444 (RHYDSRERLSNGER) the composition is skewed to basic and acidic residues.

Homodimer. Interacts with ABCB7, ABCB8/MITOSUR and ABCB10.

Its subcellular location is the cytoplasm. The protein localises to the mitochondrion. It catalyses the reaction ATP + H2O = ADP + phosphate + H(+). Its function is as follows. ATPase that regulates mitochondrial ABC transporters ABCB7, ABCB8/MITOSUR and ABCB10. Regulates mitochondrial ferric concentration and heme biosynthesis and plays a role in the maintenance of mitochondrial homeostasis and cell survival. The sequence is that of ATPase PAAT from Mus musculus (Mouse).